A 73-amino-acid polypeptide reads, in one-letter code: Large ribosomal subunit protein bL28 (73 aa).

Belongs to the bacterial ribosomal protein bL28 family.

This chain is Large ribosomal subunit protein bL28, found in Anaeromyxobacter dehalogenans (strain 2CP-1 / ATCC BAA-258).